We begin with the raw amino-acid sequence, 465 residues long: Sushi repeat-containing protein SRPX2 (465 aa).

An N-terminal signal peptide occupies residues Met-1–Pro-23. Sushi domains follow at residues Ala-69–Gln-119, Met-120–Asp-178, and Arg-262–Pro-321. Disulfide bonds link Cys-71–Cys-105, Cys-91–Cys-117, Cys-122–Cys-163, and Cys-149–Cys-176. Residues Val-177 to Val-261 form the HYR domain. Cystine bridges form between Cys-264–Cys-306 and Cys-292–Cys-319.

Forms homooligomers. Interacts with PLAUR (via the UPAR/Ly6 domains), ADAMTS4 and CTSB. Interacts with HGF; the interaction increases the mitogenic activity of HGF. Post-translationally, contains chondroitin sulfate chains. As to expression, expressed in neurons of the rolandic area of the brain (at protein level). Highly expressed in the brain, placenta, lung, trachea, uterus, adrenal gland, heart, ovary and placenta. Weakly expressed in the peripheral blood, brain and bone marrow. Expressed in numerous cancer cell lines and in gastrointestinal cancer cells. Higher levels found in colorectal cancers than in normal colonic mucosa.

It is found in the secreted. It localises to the cytoplasm. The protein resides in the cell surface. Its subcellular location is the synapse. Functionally, acts as a ligand for the urokinase plasminogen activator surface receptor. Plays a role in angiogenesis by inducing endothelial cell migration and the formation of vascular network (cords). Involved in cellular migration and adhesion. Increases the phosphorylation levels of FAK. Interacts with and increases the mitogenic activity of HGF. Promotes synapse formation. May have a role in the perisylvian region, critical for language and cognitive development. The chain is Sushi repeat-containing protein SRPX2 (SRPX2) from Homo sapiens (Human).